The primary structure comprises 216 residues: Sporozoite antigen (216 aa).

Residues 194 to 216 (QQQQPSSYGAPPASSQQPSGFFW) form a disordered region.

The polypeptide is Sporozoite antigen (Eimeria tenella (Coccidian parasite)).